A 765-amino-acid chain; its full sequence is Cyanobacterial phytochrome A (765 aa).

Positions 20–510 (IHLSGQIQPH…RKAIVNIVLR (491 aa)) are chromophore binding domain. The GAF domain maps to 152–320 (NLRDFCQIIV…VIFAEISARE (169 aa)). Cys-259 serves as a coordination point for a tetrapyrrole. Residues 535 to 748 (VASHDLQEPL…TFYFTIPVGG (214 aa)) enclose the Histidine kinase domain. His-538 bears the Phosphohistidine; by autocatalysis mark.

It in the N-terminal section; belongs to the phytochrome family. In terms of processing, contains one covalently linked tetrapyrrole chromophore.

The enzyme catalyses ATP + protein L-histidine = ADP + protein N-phospho-L-histidine.. Functionally, photoreceptor which exists in two forms that are reversibly interconvertible by light: the R form that absorbs maximally in the red region of the spectrum and the FR form that absorbs maximally in the far-red region. The polypeptide is Cyanobacterial phytochrome A (aphA) (Nostoc sp. (strain PCC 7120 / SAG 25.82 / UTEX 2576)).